A 193-amino-acid chain; its full sequence is Flagellar transcriptional regulator FlhC (193 aa).

Zn(2+) is bound by residues C138, C141, C158, and C161.

The protein belongs to the FlhC family. Heterohexamer composed of two FlhC and four FlhD subunits. Each FlhC binds a FlhD dimer, forming a heterotrimer, and a hexamer assembles by dimerization of two heterotrimers. It depends on Zn(2+) as a cofactor.

It is found in the cytoplasm. Its function is as follows. Functions in complex with FlhD as a master transcriptional regulator that regulates transcription of several flagellar and non-flagellar operons by binding to their promoter region. Activates expression of class 2 flagellar genes, including fliA, which is a flagellum-specific sigma factor that turns on the class 3 genes. Also regulates genes whose products function in a variety of physiological pathways. In Yersinia enterocolitica, this protein is Flagellar transcriptional regulator FlhC.